Consider the following 107-residue polypeptide: Nucleoid-associated protein PPA0205 (107 aa).

This sequence belongs to the YbaB/EbfC family. Homodimer.

Its subcellular location is the cytoplasm. It localises to the nucleoid. Its function is as follows. Binds to DNA and alters its conformation. May be involved in regulation of gene expression, nucleoid organization and DNA protection. In Cutibacterium acnes (strain DSM 16379 / KPA171202) (Propionibacterium acnes), this protein is Nucleoid-associated protein PPA0205.